A 436-amino-acid chain; its full sequence is tRNA modification GTPase MnmE (436 aa).

Residues Arg20, Glu77, and Lys117 each contribute to the (6S)-5-formyl-5,6,7,8-tetrahydrofolate site. The region spanning Gly214 to Leu360 is the TrmE-type G domain. Residues Asn224–Ser229, Met243–Thr249, and Asp268–Gly271 each bind GTP. Residues Ser228 and Thr249 each coordinate Mg(2+). Lys436 provides a ligand contact to (6S)-5-formyl-5,6,7,8-tetrahydrofolate.

Belongs to the TRAFAC class TrmE-Era-EngA-EngB-Septin-like GTPase superfamily. TrmE GTPase family. Homodimer. Heterotetramer of two MnmE and two MnmG subunits. Requires K(+) as cofactor.

Its subcellular location is the cytoplasm. Functionally, exhibits a very high intrinsic GTPase hydrolysis rate. Involved in the addition of a carboxymethylaminomethyl (cmnm) group at the wobble position (U34) of certain tRNAs, forming tRNA-cmnm(5)s(2)U34. The polypeptide is tRNA modification GTPase MnmE (Bartonella quintana (strain Toulouse) (Rochalimaea quintana)).